The primary structure comprises 433 residues: Evolutionarily conserved signaling intermediate in Toll pathway, mitochondrial (433 aa).

The N-terminal 48 residues, 1–48 (MSWAQAILLARGASRGWGGICSTALTGAPFSQVPPQAPRGLRCSAAAH), are a transit peptide targeting the mitochondrion. The tract at residues 36-63 (QAPRGLRCSAAAHNPDSSLVPHPPEPPR) is disordered. Lysine 372 is covalently cross-linked (Glycyl lysine isopeptide (Lys-Gly) (interchain with G-Cter in ubiquitin)). A disordered region spans residues 397–433 (SGELLPSSSELEEPPPPPPEGQEEEEDSQQRQQQGQS).

This sequence belongs to the ECSIT family. In terms of assembly, interacts with MAP3K1, SMAD4 and TRAF6. Interacts with SMAD1 only after BMP4-treatment. Part of the mitochondrial complex I assembly/MCIA complex that comprises at least the core subunits TMEM126B, NDUFAF1, ECSIT and ACAD9 and complement subunits such as COA1 and TMEM186. Interacts with NDUFAF1. Interacts with ACAD9. Interacts with TRIM59. Interacts with TMEM70 and TMEM242. Interacts (when ubiquitinated) with NF-kappa-B subunits RELA and NFKB1. Interacts with RIGI, IFIT1 and MAVS; these interactions promote RLR-mediated type I IFN induction. Interacts with SQSTM1; this interaction inhibits TLR4 signaling via functional regulation of the TRAF6-ECSIT complex. Interacts with cereblon/CRBN; this interaction inhibits the ubiquitination of ECSIT. Post-translationally, ubiquitinated on Lys-372; leading to translocation in the nucleus together with RELA and NFKB1 and expression of NF-kappa-B-dependent genes.

The protein resides in the cytoplasm. The protein localises to the nucleus. Its subcellular location is the mitochondrion. Functionally, adapter protein that plays a role in different signaling pathways including TLRs and IL-1 pathways or innate antiviral induction signaling. Plays a role in the activation of NF-kappa-B by forming a signal complex with TRAF6 and TAK1/MAP3K7 to activate TAK1/MAP3K7 leading to activation of IKKs. Once ubiquitinated, interacts with the dissociated RELA and NFKB1 proteins and translocates to the nucleus where it induces NF-kappa-B-dependent gene expression. Plays a role in innate antiviral immune response by bridging the pattern recognition receptors RIGI and MDA5/IFIT1 to the MAVS complex at the mitochondrion. Promotes proteolytic activation of MAP3K1. Involved in the BMP signaling pathway. Required for normal embryonic development. Its function is as follows. As part of the MCIA complex, involved in the assembly of the mitochondrial complex I. The protein is Evolutionarily conserved signaling intermediate in Toll pathway, mitochondrial of Bos taurus (Bovine).